A 226-amino-acid chain; its full sequence is dTTP/UTP pyrophosphatase (226 aa).

The active-site Proton acceptor is the aspartate 85.

Belongs to the Maf family. YhdE subfamily. It depends on a divalent metal cation as a cofactor.

It localises to the cytoplasm. The enzyme catalyses dTTP + H2O = dTMP + diphosphate + H(+). The catalysed reaction is UTP + H2O = UMP + diphosphate + H(+). In terms of biological role, nucleoside triphosphate pyrophosphatase that hydrolyzes dTTP and UTP. May have a dual role in cell division arrest and in preventing the incorporation of modified nucleotides into cellular nucleic acids. The protein is dTTP/UTP pyrophosphatase of Psychrobacter cryohalolentis (strain ATCC BAA-1226 / DSM 17306 / VKM B-2378 / K5).